The sequence spans 1342 residues: DNA-directed RNA polymerase subunit beta (1342 aa).

Belongs to the RNA polymerase beta chain family. The RNAP catalytic core consists of 2 alpha, 1 beta, 1 beta' and 1 omega subunit. When a sigma factor is associated with the core the holoenzyme is formed, which can initiate transcription.

The enzyme catalyses RNA(n) + a ribonucleoside 5'-triphosphate = RNA(n+1) + diphosphate. Its function is as follows. DNA-dependent RNA polymerase catalyzes the transcription of DNA into RNA using the four ribonucleoside triphosphates as substrates. The chain is DNA-directed RNA polymerase subunit beta from Edwardsiella ictaluri (strain 93-146).